Reading from the N-terminus, the 376-residue chain is Chaperone protein DnaJ (376 aa).

Residues 4–68 form the J domain; the sequence is DYYEILGVAR…ETRARYDRFG (65 aa). The tract at residues 102 to 121 is disordered; it reads GGMGGPTQQRRRGGPARGDD. The CR-type zinc finger occupies 136 to 218; it reads GGEKEIRISH…CDGKGTNQVT (83 aa). Residues Cys149, Cys152, Cys166, Cys169, Cys192, Cys195, Cys206, and Cys209 each contribute to the Zn(2+) site. CXXCXGXG motif repeat units lie at residues 149–156, 166–173, 192–199, and 206–213; these read CETCSGSG, CSTCSGSG, CPTCNGTG, and CDACDGKG.

The protein belongs to the DnaJ family. Homodimer. Zn(2+) is required as a cofactor.

The protein resides in the cytoplasm. In terms of biological role, participates actively in the response to hyperosmotic and heat shock by preventing the aggregation of stress-denatured proteins and by disaggregating proteins, also in an autonomous, DnaK-independent fashion. Unfolded proteins bind initially to DnaJ; upon interaction with the DnaJ-bound protein, DnaK hydrolyzes its bound ATP, resulting in the formation of a stable complex. GrpE releases ADP from DnaK; ATP binding to DnaK triggers the release of the substrate protein, thus completing the reaction cycle. Several rounds of ATP-dependent interactions between DnaJ, DnaK and GrpE are required for fully efficient folding. Also involved, together with DnaK and GrpE, in the DNA replication of plasmids through activation of initiation proteins. In Trichormus variabilis (strain ATCC 29413 / PCC 7937) (Anabaena variabilis), this protein is Chaperone protein DnaJ.